We begin with the raw amino-acid sequence, 552 residues long: Urocanate hydratase (552 aa).

Residues 49-50, Gln127, 173-175, Asp193, 239-240, 260-264, 270-271, and Tyr319 contribute to the NAD(+) site; these read GG, GMG, NA, QTSAH, and YI. Cys407 is an active-site residue. Position 489 (Gly489) interacts with NAD(+).

Belongs to the urocanase family. It depends on NAD(+) as a cofactor.

It is found in the cytoplasm. It carries out the reaction 4-imidazolone-5-propanoate = trans-urocanate + H2O. It functions in the pathway amino-acid degradation; L-histidine degradation into L-glutamate; N-formimidoyl-L-glutamate from L-histidine: step 2/3. In terms of biological role, catalyzes the conversion of urocanate to 4-imidazolone-5-propionate. In Bacillus cereus (strain 03BB102), this protein is Urocanate hydratase.